The primary structure comprises 1096 residues: Protein spire (1096 aa).

2 disordered regions span residues 1–79 and 184–211; these read MTEH…GNGT and VESQ…TSSV. Positions 37–51 are enriched in polar residues; that stretch reads LSTSPDSANGDAQQA. Residues 53 to 65 show a composition bias toward basic residues; the sequence is THTHIISHTHSKG. Composition is skewed to low complexity over residues 66–77 and 189–201; these read AAKTQTQTQNGN and QEAS…QKQP. The 256-residue stretch at 111–366 folds into the KIND domain; that stretch reads VTLNNILDSF…RALATETIEL (256 aa). Residues 315-340 are a coiled coil; the sequence is KRWDDEAEEERNDTKELEHIIETCRN. 2 consecutive WH2 domains span residues 436 to 454 and 500 to 517; these read PYEI…LRKV and PREQ…LKQI. Disordered regions lie at residues 560–588, 614–656, and 693–762; these read DDSS…AHLA, QECQ…PSFT, and QSNL…LGPW. The span at 574-585 shows a compositional bias: basic residues; sequence HQHHQQHQPHHA. 2 stretches are compositionally biased toward low complexity: residues 633 to 645 and 714 to 725; these read APRQ…QAQA and DAGSQSQSGASS. Residues 737 to 754 are compositionally biased toward basic and acidic residues; the sequence is EGDHSQTTDGPPRLDEAH. The interval 780–800 is spir-box; the sequence is LSVTLAEIVHIRSVMTKAELE. The span at 874-894 shows a compositional bias: low complexity; that stretch reads PASSSTPSPSHHAHQAHSSST. Disordered regions lie at residues 874–899, 912–958, and 997–1021; these read PASS…NIMD, RSES…APGH, and RSME…SSTL. Positions 921–941 are enriched in polar residues; the sequence is STVGSAPSSPKHQRSNMSTPG.

It belongs to the spire family. In terms of assembly, interacts with bsk, Rho1, Rac1, Cdc42 and wash. Interacts with capu. Phosphorylated by Jnk kinase (bsk).

The protein resides in the cytoplasm. It localises to the cytoskeleton. It is found in the perinuclear region. The protein localises to the cell membrane. Its subcellular location is the cytoplasmic vesicle membrane. Its function is as follows. Acts as an actin nucleation factor, remains associated with the slow-growing pointed end of the new filament. Promotes dissociation of capu from the barbed end of actin filaments. Involved in intracellular vesicle transport along actin fibers, providing a novel link between actin cytoskeleton dynamics and intracellular transport. Required for localization of determinants within the developing oocyte to the posterior pole and to the dorsal anterior corner. Links Rho family signaling and Jnk function to the actin cytoskeleton. The polypeptide is Protein spire (Drosophila pseudoobscura pseudoobscura (Fruit fly)).